The chain runs to 179 residues: MAVLQKSMSFSLMGTLAASCLLLIALWAQEANALPINTRCKLEVSNFQQPYIVNRTFMLAKEVSLADNNTDVWLIGEKLFRGVSAKDQCYLMKQVLNFTLEDVLLPQSDRFQPYMQEVVPFLTKLSNQLSSCHISGDDQNIQKNVRRLKETVKKLGESGEIKAIGELDLLFMSLRNACV.

The N-terminal stretch at 1 to 33 (MAVLQKSMSFSLMGTLAASCLLLIALWAQEANA) is a signal peptide. 2 disulfides stabilise this stretch: C40-C132 and C89-C178. N-linked (GlcNAc...) asparagine glycans are attached at residues N54, N68, and N97.

Belongs to the IL-10 family.

The protein resides in the secreted. In terms of biological role, cytokine that contributes to the inflammatory response in vivo. The chain is Interleukin-22b from Mus musculus (Mouse).